We begin with the raw amino-acid sequence, 363 residues long: Protein arginine N-methyltransferase 2 (363 aa).

ANK repeat units lie at residues 22–46 (AAQT…FQDD) and 48–80 (LGWS…AVDK). The RMT2 domain maps to 111-363 (KTSAGDNLVF…RLPIAKMSLI (253 aa)). Residues Phe-120, 186–191 (FGLGIV), 209–211 (EAH), 236–237 (WQ), and Asp-265 contribute to the S-adenosyl-L-methionine site.

This sequence belongs to the class I-like SAM-binding methyltransferase superfamily. RMT2 methyltransferase family. As to quaternary structure, monomer.

It localises to the cytoplasm. Its subcellular location is the nucleus. S-adenosyl-L-methionine-dependent protein-arginine N-methyltransferase that methylates the delta-nitrogen atom of arginine residues to form N5-methylarginine (type IV) in target proteins. Monomethylates ribosomal protein L12. This Cryptococcus neoformans var. neoformans serotype D (strain B-3501A) (Filobasidiella neoformans) protein is Protein arginine N-methyltransferase 2.